The chain runs to 893 residues: MKNRKALFIPLFIIILFIAFFNKIINFIINIKWFKEVNYLTIYFTKMRAIIILMIPIFIIFFISIWMYYKSLMINKNKSVVDIGLNKNNYGKKLFFIFNFIVSIFLAYIFSSSYWYRILQFNNSVDFNVKDPIFFKDVSFYVFKLPLFESLYKVIISLLLFLVITTFIAYFILEAKYKIQSKKDINLKNINHGIKSFAGKQLAIVSGLIILFISFGHLIKIWNLVYSSNGVSFGASYTDVHATLLFYKIIVVITLISSIVTLLSIVKGKFKPVSICIGITIFLIVSQNIASFLVQNFIVKSNEKTLEQPYIKNNIDLTRKAFALDDIEIRDFDIKNDLQKQDIADNKASIDNIRINSFKPTLEFYNQVQIIRYYYTFNDIDIDRYNINGKYNQVFLAAREIDTDALNPNTWQNRHLIYTHGFGAVMNKVNSVTSEGQPDFVIKDIPPYNKTNIKLTNPRIYFGEKTNDYVIVNTKINEFDYPKEDSNKTNKYNGHAGIKMSFINRLLFAINKKDINFLLSKDIKKDSKIIINRNIVERAKKIAPFLTYDSDPYMVIYNGKIYWIIDAYTTTNRYPYSEPYDGINYIRNSAKVVIDSVDGDTNFYITDKKDPIVNNYAKIFKGLFKEEKDAPKEIREHFRYPKDLFSIQSKVLGKYHVKDPGVFYNGEDLWEVSKDQKHVEGETNTNDAPYIIMKLPDQNKEEMVLLNYFNVMKKDNMIALFGARMDGEQYGKKILYKLPSDKTVYSPYLFKQKINQDTNISKELSLWNREGSQVQYGDTIILPIKNSLLYIEPLYLRASGKNSIPEMKRVILSYNDRLVLSSSIQEGIKEIFNSKDNKINDKNEKDSTKTIDDSKLKKAQEYYNKAIEAQKNGDWTKYGEDINELGNILNNIK.

A run of 7 helical transmembrane segments spans residues 9–29 (IPLF…NFII), 49–69 (AIII…WMYY), 94–114 (LFFI…SSSY), 154–174 (VIIS…FILE), 202–222 (LAIV…IKIW), 246–266 (FYKI…LSIV), and 273–293 (VSIC…ASFL).

The protein belongs to the UPF0182 family.

Its subcellular location is the cell membrane. The polypeptide is UPF0182 protein CLK_3152 (Clostridium botulinum (strain Loch Maree / Type A3)).